The sequence spans 292 residues: Pyridoxal 5'-phosphate synthase subunit PdxS (292 aa).

Asp22 contacts D-ribose 5-phosphate. Lys79 acts as the Schiff-base intermediate with D-ribose 5-phosphate in catalysis. A D-ribose 5-phosphate-binding site is contributed by Gly151. Arg163 lines the D-glyceraldehyde 3-phosphate pocket. D-ribose 5-phosphate is bound by residues Gly212 and 233–234 (GS).

It belongs to the PdxS/SNZ family. In terms of assembly, in the presence of PdxT, forms a dodecamer of heterodimers.

It catalyses the reaction aldehydo-D-ribose 5-phosphate + D-glyceraldehyde 3-phosphate + L-glutamine = pyridoxal 5'-phosphate + L-glutamate + phosphate + 3 H2O + H(+). Its pathway is cofactor biosynthesis; pyridoxal 5'-phosphate biosynthesis. Functionally, catalyzes the formation of pyridoxal 5'-phosphate from ribose 5-phosphate (RBP), glyceraldehyde 3-phosphate (G3P) and ammonia. The ammonia is provided by the PdxT subunit. Can also use ribulose 5-phosphate and dihydroxyacetone phosphate as substrates, resulting from enzyme-catalyzed isomerization of RBP and G3P, respectively. The sequence is that of Pyridoxal 5'-phosphate synthase subunit PdxS from Thermoanaerobacter sp. (strain X514).